The primary structure comprises 742 residues: 2'-5'-oligoadenylate synthase 2 (742 aa).

A disordered region spans residues 1–35 (MGNWLTGNWSSDRSSGYSSGWSPGGSSGVPSGPVH). The N-myristoyl glycine moiety is linked to residue Gly2. Low complexity predominate over residues 10–21 (SSDRSSGYSSGW). OAS domain stretches follow at residues 60–374 (VPSQ…YWDV) and 382–721 (TPSH…WKVP). The residue at position 417 (Lys417) is an N6-acetyllysine. Residue Ser436 coordinates ATP. 3 residues coordinate Mg(2+): Asp448, Asp450, and Asp519. Arg582 and Lys585 together coordinate ATP.

The protein belongs to the 2-5A synthase family. In terms of assembly, homodimer. It depends on Mg(2+) as a cofactor. Post-translationally, myristoylation is not essential for its activity. In terms of processing, glycosylated. Glycosylation is essential for its activity. As to expression, expressed in the uterus. Expressed in mammary glands: expressed at low level before the establishment of lactation, then expression strongly increases, and subsequently decreases during early involution.

The protein resides in the cytoplasm. It is found in the perinuclear region. The enzyme catalyses 3 ATP = 5'-triphosphoadenylyl-(2'-&gt;5')-adenylyl-(2'-&gt;5')-adenosine + 2 diphosphate. Its activity is regulated as follows. Produced as a latent enzyme which is activated by double stranded RNA (dsRNA) generated during the course of viral infection. The dsRNA activator must be at least 15 nucleotides long, and no modification of the 2'-hydroxyl group is tolerated. ssRNA or dsDNA do not act as activators. Strongly inhibited by copper, iron and zinc ions. Partially inhibited by cobalt and nickel ions. In terms of biological role, interferon-induced, dsRNA-activated antiviral enzyme which plays a critical role in cellular innate antiviral response. Activated by detection of double stranded RNA (dsRNA): polymerizes higher oligomers of 2'-5'-oligoadenylates (2-5A) from ATP which then bind to the inactive monomeric form of ribonuclease L (RNASEL) leading to its dimerization and subsequent activation. Activation of RNASEL leads to degradation of cellular as well as viral RNA, resulting in the inhibition of protein synthesis, thus terminating viral replication. Can mediate the antiviral effect via the classical RNASEL-dependent pathway or an alternative antiviral pathway independent of RNASEL. In addition, it may also play a role in other cellular processes such as apoptosis, cell growth, differentiation and gene regulation. May act as a negative regulator of lactation, stopping lactation in virally infected mammary gland lobules, thereby preventing transmission of viruses to neonates. Non-infected lobules would not be affected, allowing efficient pup feeding during infection. The protein is 2'-5'-oligoadenylate synthase 2 of Mus musculus (Mouse).